Here is a 330-residue protein sequence, read N- to C-terminus: Beta-ketoacyl-[acyl-carrier-protein] synthase III (330 aa).

Residues Cys-114 and His-257 contribute to the active site. Residues 258 to 262 form an ACP-binding region; sequence QANLR. Asn-287 is a catalytic residue.

Belongs to the thiolase-like superfamily. FabH family. As to quaternary structure, homodimer.

Its subcellular location is the cytoplasm. It catalyses the reaction malonyl-[ACP] + acetyl-CoA + H(+) = 3-oxobutanoyl-[ACP] + CO2 + CoA. The protein operates within lipid metabolism; fatty acid biosynthesis. Functionally, catalyzes the condensation reaction of fatty acid synthesis by the addition to an acyl acceptor of two carbons from malonyl-ACP. Catalyzes the first condensation reaction which initiates fatty acid synthesis and may therefore play a role in governing the total rate of fatty acid production. Possesses both acetoacetyl-ACP synthase and acetyl transacylase activities. Its substrate specificity determines the biosynthesis of branched-chain and/or straight-chain of fatty acids. The polypeptide is Beta-ketoacyl-[acyl-carrier-protein] synthase III (Oleidesulfovibrio alaskensis (strain ATCC BAA-1058 / DSM 17464 / G20) (Desulfovibrio alaskensis)).